A 310-amino-acid chain; its full sequence is Transcriptional activator BRRF1 (310 aa).

Belongs to the lymphocryptovirus BBRF1 family.

Its function is as follows. Enhances the ability of BRLF1 to induce lytic infection by cooperating with it to transcriptionally activate the BZLF1 promoter. The protein is Transcriptional activator BRRF1 of Epstein-Barr virus (strain AG876) (HHV-4).